The following is a 66-amino-acid chain: Large ribosomal subunit protein uL29 (66 aa).

It belongs to the universal ribosomal protein uL29 family.

The sequence is that of Large ribosomal subunit protein uL29 from Thermococcus onnurineus (strain NA1).